An 889-amino-acid polypeptide reads, in one-letter code: DNA mismatch repair protein MutS (889 aa).

Low complexity predominate over residues 1–17 (MPKTNSSAASTNANPSS). The interval 1–20 (MPKTNSSAASTNANPSSLQQ) is disordered. 640–647 (GPNMGGKS) is an ATP binding site.

The protein belongs to the DNA mismatch repair MutS family.

Its function is as follows. This protein is involved in the repair of mismatches in DNA. It is possible that it carries out the mismatch recognition step. This protein has a weak ATPase activity. This Pseudoalteromonas atlantica (strain T6c / ATCC BAA-1087) protein is DNA mismatch repair protein MutS.